A 200-amino-acid chain; its full sequence is Putative 3-methyladenine DNA glycosylase (200 aa).

This sequence belongs to the DNA glycosylase MPG family.

The protein is Putative 3-methyladenine DNA glycosylase of Shouchella clausii (strain KSM-K16) (Alkalihalobacillus clausii).